Here is an 842-residue protein sequence, read N- to C-terminus: Protein translocase subunit SecA (842 aa).

Residues glutamine 91, 109–113 (GEGKT), and aspartate 498 each bind ATP. Positions 798-824 (QGQHVSAEDGKEKVKPQPVVKDNHIGR) are enriched in basic and acidic residues. Residues 798 to 827 (QGQHVSAEDGKEKVKPQPVVKDNHIGRNDP) form a disordered region. 4 residues coordinate Zn(2+): cysteine 828, cysteine 830, cysteine 839, and cysteine 840.

Belongs to the SecA family. As to quaternary structure, monomer and homodimer. Part of the essential Sec protein translocation apparatus which comprises SecA, SecYEG and auxiliary proteins SecDF. Other proteins may also be involved. Requires Zn(2+) as cofactor.

Its subcellular location is the cell membrane. It is found in the cytoplasm. The catalysed reaction is ATP + H2O + cellular proteinSide 1 = ADP + phosphate + cellular proteinSide 2.. Part of the Sec protein translocase complex. Interacts with the SecYEG preprotein conducting channel. Has a central role in coupling the hydrolysis of ATP to the transfer of proteins into and across the cell membrane, serving as an ATP-driven molecular motor driving the stepwise translocation of polypeptide chains across the membrane. The chain is Protein translocase subunit SecA from Staphylococcus carnosus (strain TM300).